Reading from the N-terminus, the 495-residue chain is PXA domain protein 1 (495 aa).

The region spanning 1 to 174 (MAKLSSLLNP…KFIIYLSKAI (174 aa)) is the PXA domain. The next 2 membrane-spanning stretches (helical) occupy residues 7-27 (LLNPIISKILEIYVYSWYSGI) and 235-255 (WFFFYTLLYPWIALVSAFVAE). 2 stretches are compositionally biased toward polar residues: residues 402–419 (AVSSPTKANTNKSHQRSF) and 427–436 (DSQTPSENSA). A disordered region spans residues 402 to 436 (AVSSPTKANTNKSHQRSFSIPKATKDSQTPSENSA). The helical transmembrane segment at 446–466 (AYSQIPVIPFFLPSDKLIMLV) threads the bilayer.

It localises to the endosome membrane. Functionally, required for required for normal vacuolar morphology and for vacuolar protein transport. Also required for endosome-to-Golgi protein transport. This Schizosaccharomyces pombe (strain 972 / ATCC 24843) (Fission yeast) protein is PXA domain protein 1 (pxa1).